Here is a 396-residue protein sequence, read N- to C-terminus: MAKAKFERTKPHVNIGTIGHVDHGKTTTTAAITKVLADAYPELNEAFAFDSIDKAPEEKERGITINISHVEYQTEKRHYAHVDAPGHADYIKNMITGAAQMDGAILVVAATDGPMPQTREHVLLARQVGVPYILVALNKCDMVEDEEIIELVEMEVRELLAEQDYDEEAPIVHISALKALEGDEKWGKQILELMQACDDNIPDPVRETDKPFLMPIEDIFTITGRGTVVTGRVERGTLNVNDDVDIIGIKEKSTSTTVTGIEMFRKLLDSAEAGDNCGLLLRGIKREDVERGQVIVKPGAYTPHTEFEGSVYVLSKDEGGRHTPFFDNYRPQFYFRTTDVTGVVKLPEGTEMVMPGDNVDMSVTLIQPVAMDEGLRFAIREGSRTVGAGRVTKIIK.

The region spanning 10–205 is the tr-type G domain; it reads KPHVNIGTIG…ACDDNIPDPV (196 aa). The G1 stretch occupies residues 19–26; sequence GHVDHGKT. 19 to 26 contributes to the GTP binding site; it reads GHVDHGKT. Residue Thr-26 participates in Mg(2+) binding. The segment at 62–66 is G2; the sequence is GITIN. Positions 83–86 are G3; sequence DAPG. GTP is bound by residues 83 to 87 and 138 to 141; these read DAPGH and NKCD. Positions 138-141 are G4; that stretch reads NKCD. The G5 stretch occupies residues 175–177; the sequence is SAL.

It belongs to the TRAFAC class translation factor GTPase superfamily. Classic translation factor GTPase family. EF-Tu/EF-1A subfamily. As to quaternary structure, monomer.

It is found in the cytoplasm. The enzyme catalyses GTP + H2O = GDP + phosphate + H(+). Its function is as follows. GTP hydrolase that promotes the GTP-dependent binding of aminoacyl-tRNA to the A-site of ribosomes during protein biosynthesis. This chain is Elongation factor Tu, found in Corynebacterium glutamicum (strain R).